The sequence spans 365 residues: Green-sensitive opsin P521 (365 aa).

Over 1-51 the chain is Extracellular; sequence MTEAWNVAVFAARRSRDDDDTTRGSVFTYTNTNNTRGPFEGPNYHIAPRWV. N-linked (GlcNAc...) asparagine glycosylation occurs at N33. Residues 52 to 76 form a helical membrane-spanning segment; the sequence is YNLVSFFMIIVVIASCFTNGLVLVA. The Cytoplasmic segment spans residues 77-88; sequence TAKFKKLRHPLN. The chain crosses the membrane as a helical span at residues 89 to 113; sequence WILVNLAFVDLVETLVASTISVFNQ. The Extracellular segment spans residues 114–128; sequence IFGYFILGHPLCVIE. C125 and C202 are oxidised to a cystine. Residues 129–148 form a helical membrane-spanning segment; the sequence is GYVVSSCGITGLWSLAIISW. The Cytoplasmic segment spans residues 149 to 167; it reads ERWFVVCKPFGNIKFDSKL. The helical transmembrane segment at 168–191 threads the bilayer; it reads AIIGIVFSWVWAWGWSAPPIFGWS. Residues 192–217 are Extracellular-facing; it reads RYWPHGLKTSCGPDVFSGSVELGCQS. A helical transmembrane segment spans residues 218–245; the sequence is FMLTLMITCCFLPLFIIIVCYLQVWMAI. The Cytoplasmic segment spans residues 246–267; that stretch reads RAVAAQQKESESTQKAEREVSR. Residues 268–291 traverse the membrane as a helical segment; the sequence is MVVVMIVAFCICWGPYASFVSFAA. At 292-299 the chain is on the extracellular side; sequence ANPGYAFH. A helical membrane pass occupies residues 300 to 324; the sequence is PLAAALPAYFAKSATIYNPVIYVFM. The residue at position 311 (K311) is an N6-(retinylidene)lysine. Residues 325 to 365 lie on the Cytoplasmic side of the membrane; it reads NRQFRNCIMQLFGKKVDDGSEASTTSRTEVSSVSNSSVAPA. The interval 342–365 is disordered; the sequence is DGSEASTTSRTEVSSVSNSSVAPA. Residues 345–365 show a composition bias toward low complexity; the sequence is EASTTSRTEVSSVSNSSVAPA.

Belongs to the G-protein coupled receptor 1 family. Opsin subfamily. Phosphorylated on some or all of the serine and threonine residues present in the C-terminal region. In terms of tissue distribution, in this lizard the color pigments are found in the rod-shaped photoreceptor cells which have been derived from ancestral cone-like photoreceptors.

Its subcellular location is the membrane. Its function is as follows. Visual pigments are the light-absorbing molecules that mediate vision. They consist of an apoprotein, opsin, covalently linked to cis-retinal. This chain is Green-sensitive opsin P521, found in Gekko gecko (Tokay gecko).